We begin with the raw amino-acid sequence, 108 residues long: UPF0060 membrane protein sll0793 (108 aa).

4 helical membrane-spanning segments follow: residues 7–27, 32–52, 64–84, and 86–106; these read LYFVMAGLCEIGGGYLVWLWI, SVWLALVRAILLTVYGFVATL, YGGIFIILSIIWGWQVDNVVV, and RLDWLGAAIALVGVLVMMYAN.

The protein belongs to the UPF0060 family.

The protein resides in the cell inner membrane. The sequence is that of UPF0060 membrane protein sll0793 from Synechocystis sp. (strain ATCC 27184 / PCC 6803 / Kazusa).